The following is a 354-amino-acid chain: Probable butyrate kinase 2 (354 aa).

Belongs to the acetokinase family.

The protein resides in the cytoplasm. It catalyses the reaction butanoate + ATP = butanoyl phosphate + ADP. The sequence is that of Probable butyrate kinase 2 from Caldanaerobacter subterraneus subsp. tengcongensis (strain DSM 15242 / JCM 11007 / NBRC 100824 / MB4) (Thermoanaerobacter tengcongensis).